The primary structure comprises 915 residues: Probable LRR receptor-like serine/threonine-protein kinase At2g16250 (915 aa).

A signal peptide spans 1 to 28; sequence MVDQRRSALGFVLLLLCLVLFFDCVVVG. Topologically, residues 29-451 are extracellular; the sequence is QTQSRFSEKL…ISRRTVIILA (423 aa). N-linked (GlcNAc...) asparagine glycosylation is found at N71, N78, N101, N109, N150, N158, and N177. LRR repeat units follow at residues 102–125, 127–150, 151–174, 176–198, 199–223, 225–247, 248–271, 272–295, 297–320, 321–344, and 366–390; these read LTRL…WFGV, LLAL…TLGN, LTSL…SLGQ, LNLS…SFSS, LKNL…LGAL, KLIH…LGDL, VNLV…LRKL, SKLQ…LFSA, SQLQ…CWSL, PKLR…SYDS, and LRRF…VTGE. The N-linked (GlcNAc...) asparagine glycan is linked to N230. N332 carries an N-linked (GlcNAc...) asparagine glycan. N-linked (GlcNAc...) asparagine glycosylation is found at N391, N429, and N437. A helical membrane pass occupies residues 452-472; it reads AVGGGVAFILLFVILPIILVL. The Cytoplasmic portion of the chain corresponds to 473 to 915; that stretch reads CMRHRRRAAQ…AAYGVVEDNL (443 aa). The disordered stretch occupies residues 482–503; it reads QRGNNDRPKPAGEASQQPPKGA. A Protein kinase domain is found at 527 to 811; that stretch reads FNDANLIKRG…IVNALENPLK (285 aa). Residues 533 to 541 and K555 contribute to the ATP site; that span reads IKRGHSGNL. The active-site Proton acceptor is D657. The tract at residues 851–915 is disordered; the sequence is TAVQAGATTS…AAYGVVEDNL (65 aa). Residues 859-870 show a composition bias toward gly residues; that stretch reads TSGGGGGGGGNG. Residues 871-892 are compositionally biased toward low complexity; it reads LRNSGSQGSSGRNNNNNGNSSS.

Belongs to the protein kinase superfamily. Ser/Thr protein kinase family.

It is found in the membrane. The enzyme catalyses L-seryl-[protein] + ATP = O-phospho-L-seryl-[protein] + ADP + H(+). It catalyses the reaction L-threonyl-[protein] + ATP = O-phospho-L-threonyl-[protein] + ADP + H(+). The chain is Probable LRR receptor-like serine/threonine-protein kinase At2g16250 from Arabidopsis thaliana (Mouse-ear cress).